The primary structure comprises 528 residues: Cytochrome P450 monooxygenase vrcB (528 aa).

The helical transmembrane segment at 5–27 (YGLFFAAVALYSVALVIYRLYLH) threads the bilayer. Cys-470 provides a ligand contact to heme.

Belongs to the cytochrome P450 family. Heme serves as cofactor.

It localises to the membrane. The catalysed reaction is variecoladiene + 4 reduced [NADPH--hemoprotein reductase] + 4 O2 = variecolin + 4 oxidized [NADPH--hemoprotein reductase] + 6 H2O + 4 H(+). It functions in the pathway secondary metabolite biosynthesis; terpenoid biosynthesis. Its function is as follows. Cytochrome P450 monooxygenase; part of the gene cluster that mediates the biosynthesis of the sesterterpene variecolin. The first step in the pathway is performed by the variecoladiene synthase vrcA that possesses both prenyl transferase and terpene cyclase activity, converting isopentenyl diphosphate and dimethylallyl diphosphate into geranylfarnesyl pyrophosphate (GFPP) and then converting GFPP into the tetracyclic variecoladiene. The cytochrome P450 monooxygenase vrcB then catalyzes multiple oxidations at C-5 and C-20 positions to yield variecolin. In Aspergillus aculeatus (strain ATCC 16872 / CBS 172.66 / WB 5094), this protein is Cytochrome P450 monooxygenase vrcB.